Here is a 145-residue protein sequence, read N- to C-terminus: Holo-[acyl-carrier-protein] synthase (145 aa).

The Mg(2+) site is built by Asp-8 and Glu-59.

The protein belongs to the P-Pant transferase superfamily. AcpS family. It depends on Mg(2+) as a cofactor.

Its subcellular location is the cytoplasm. The enzyme catalyses apo-[ACP] + CoA = holo-[ACP] + adenosine 3',5'-bisphosphate + H(+). Functionally, transfers the 4'-phosphopantetheine moiety from coenzyme A to a Ser of acyl-carrier-protein. In Granulibacter bethesdensis (strain ATCC BAA-1260 / CGDNIH1), this protein is Holo-[acyl-carrier-protein] synthase.